Reading from the N-terminus, the 597-residue chain is Probable translation initiation factor IF-2 (597 aa).

Residues 4 to 221 (IRQPIIAVLG…LISGLAQKYL (218 aa)) form the tr-type G domain. A G1 region spans residues 13-20 (GHVDHGKT). Residue 13–20 (GHVDHGKT) coordinates GTP. Positions 38-42 (GITQH) are G2. The tract at residues 77 to 80 (DTPG) is G3. GTP contacts are provided by residues 77–81 (DTPGH) and 131–134 (NKID). The segment at 131–134 (NKID) is G4. Residues 199–201 (SAK) form a G5 region.

The protein belongs to the TRAFAC class translation factor GTPase superfamily. Classic translation factor GTPase family. IF-2 subfamily.

Function in general translation initiation by promoting the binding of the formylmethionine-tRNA to ribosomes. Seems to function along with eIF-2. The sequence is that of Probable translation initiation factor IF-2 from Thermococcus sibiricus (strain DSM 12597 / MM 739).